A 364-amino-acid polypeptide reads, in one-letter code: Isopentenyl-diphosphate delta-isomerase (364 aa).

Residues 1–13 (MSSAQRKDDHVRL) are compositionally biased toward basic and acidic residues. A disordered region spans residues 1–24 (MSSAQRKDDHVRLATEQQRAHSGR). 6 to 7 (RK) serves as a coordination point for substrate. FMN-binding positions include 64–66 (AMT), Ser-94, and Asn-123. Position 94-96 (94-96 (SMH)) interacts with substrate. Gln-153 is a binding site for substrate. Glu-154 contributes to the Mg(2+) binding site. FMN-binding positions include Lys-185, Ser-210, Thr-215, 259–261 (GIR), and 280–281 (SG).

Belongs to the IPP isomerase type 2 family. In terms of assembly, homooctamer. Dimer of tetramers. It depends on FMN as a cofactor. NADPH is required as a cofactor. Requires Mg(2+) as cofactor.

It localises to the cytoplasm. It catalyses the reaction isopentenyl diphosphate = dimethylallyl diphosphate. Functionally, involved in the biosynthesis of isoprenoids. Catalyzes the 1,3-allylic rearrangement of the homoallylic substrate isopentenyl (IPP) to its allylic isomer, dimethylallyl diphosphate (DMAPP). This chain is Isopentenyl-diphosphate delta-isomerase, found in Kitasatospora griseola (Streptomyces griseolosporeus).